Reading from the N-terminus, the 204-residue chain is Cysteine-rich protein 3 (204 aa).

The region spanning 3-64 is the LIM zinc-binding 1 domain; that stretch reads WTCPRCQQPV…KPCYGALFGP (62 aa). The tract at residues 88–107 is disordered; that stretch reads ISLSPSNFSPPRPRTGLSRA. The region spanning 122–183 is the LIM zinc-binding 2 domain; that stretch reads SLCPGCGDPV…IPCYGYLFGP (62 aa).

As to expression, expressed specifically by the thymus.

The protein resides in the cytoplasm. The polypeptide is Cysteine-rich protein 3 (Crip3) (Mus musculus (Mouse)).